The following is a 312-amino-acid chain: Glycine--tRNA ligase alpha subunit (312 aa).

This sequence belongs to the class-II aminoacyl-tRNA synthetase family. Tetramer of two alpha and two beta subunits.

It is found in the cytoplasm. It carries out the reaction tRNA(Gly) + glycine + ATP = glycyl-tRNA(Gly) + AMP + diphosphate. This Thiobacillus denitrificans (strain ATCC 25259 / T1) protein is Glycine--tRNA ligase alpha subunit.